Consider the following 88-residue polypeptide: Conotoxin Ca8.3 (88 aa).

The N-terminal stretch at 1–21 (MMLKMGAMFVLLLLFILPSSQ) is a signal peptide. Positions 22–46 (QEGDVQARKTHLKSGFYGTLAMSTR) are excised as a propeptide.

The protein belongs to the conotoxin S superfamily. In terms of processing, contains 5 disulfide bonds. In terms of tissue distribution, expressed by the venom duct.

The protein localises to the secreted. This Conus caracteristicus (Characteristic cone) protein is Conotoxin Ca8.3.